Reading from the N-terminus, the 727-residue chain is MPTTCGFPNCKFRSRYRGLEDNRHFYRIPKRPLILRQRWLTAIGRTEETVVSQLRICSAHFEGGEKKEGDIPVPDPTVDKQIKIELPPKESKNSDRRRKQNIPARFPRPESPSGDSPSYSKKSRSFRDFYPSLSSTPSFDPAQSPHTPHPPVLPDPQQALNDILSMTSTRMNGPSSSRPLVALLDGRDCSVEMPILKDVATVAFCDAQSTQEIHEKVLNEAVAALMYHSIKLEKEDLEKFKVLKVVFRIGYGIDNIDVKAATELGIAVCHAPGDYVEDVADSTLSLILDLFRRTYWHAKSYSETRKTIGADQVRENAVGSKKVRGSVLGILGCGRVGTAVGLRARAFGLHIIFYDPFVREGHDKALGFERVYTMDEFMSRSDCISLHCNLGDETRGIINADSLRQCKSGVYIVNTSHAGLINENDLAAALKNGHVKGAALDVHDSVRFDPNCLNPLVGCPNIINTPHSAWMTEASCKDLRINAAKEIRKAINGRCPQDLTHCINKEAVMRNSNPINRRTSSAHPLLNMGFPTLPNFPPMSMSPHFPYPNPLLAMGAQMGALNPFMGNGALPFNPAAALSSLAAAQAANAQRGSPANRSSRSSPSPHTNKSSVSPGNNGHVKTEPSSPAAKIEVDIAENDKHSMMTFLQRLIAPNGDSGASTADSGIEGGDKEKVQSDGDENMEDMEVIDAEKLKEELNIGQLEEPEEISVGLNNGNRINIDEQPLAT.

The segment at 5–60 adopts a THAP-type zinc-finger fold; sequence CGFPNCKFRSRYRGLEDNRHFYRIPKRPLILRQRWLTAIGRTEETVVSQLRICSAH. The segment at 64-158 is disordered; the sequence is GEKKEGDIPV…HPPVLPDPQQ (95 aa). The segment covering 77-94 has biased composition (basic and acidic residues); that stretch reads TVDKQIKIELPPKESKNS. Residues Tyr-251, 331–336, Asp-355, 388–394, 415–417, Asp-441, and 467–470 each bind NAD(+); these read LGCGRV, CNLGDET, TSH, and HSAW. Low complexity predominate over residues 587 to 613; sequence ANAQRGSPANRSSRSSPSPHTNKSSVS. 2 disordered regions span residues 587–629 and 652–681; these read ANAQ…SPAA and APNGDSGASTADSGIEGGDKEKVQSDGDEN.

It belongs to the D-isomer specific 2-hydroxyacid dehydrogenase family. Homodimer.

Its function is as follows. Binds DNA and represses gene expression. Plays a role in regulation of life span, possibly by regulating transcription of genes important for lipid metabolism. This Caenorhabditis elegans protein is C-terminal-binding protein 1.